Consider the following 357-residue polypeptide: MNTLFMHCRPGFEGEVCSEISDHAACLDVAGYAKARPDTACAEFICTEADGAERLMNGQRFDALIFPRQWARGMFLELPETDRISVILAQLSAFPACGSLWLEVVDTNDGKELSNFCKKFEAPLRKALMQAGKLVDDPRKPRLLLTFKSGREVFLGLADADNSAMWPMGIPRLKFPREAPSRSTLKLEEAWHHFIPRDQWDERLSGDMTGVDLGAAPGGWTYQLVRRGMLVTAIDNGPMAESLMDTGLVQHLMADGFTYKPRHPVDWMVCDIVEKPARNAALLETWLGEGLCREAVVNLKLPMKQRYAEVRRLLDRIEEGFQARGVRVSIGCKQLYHDREEVTCHLRRLDVAKAATK.

Residues S183, A216 to G219, D235, D255, and D271 contribute to the S-adenosyl-L-methionine site. K300 (proton acceptor) is an active-site residue.

Belongs to the class I-like SAM-binding methyltransferase superfamily. RNA methyltransferase RlmE family. RlmM subfamily. Monomer.

The protein localises to the cytoplasm. It carries out the reaction cytidine(2498) in 23S rRNA + S-adenosyl-L-methionine = 2'-O-methylcytidine(2498) in 23S rRNA + S-adenosyl-L-homocysteine + H(+). Its function is as follows. Catalyzes the 2'-O-methylation at nucleotide C2498 in 23S rRNA. This Pseudomonas savastanoi pv. phaseolicola (strain 1448A / Race 6) (Pseudomonas syringae pv. phaseolicola (strain 1448A / Race 6)) protein is Ribosomal RNA large subunit methyltransferase M.